The chain runs to 900 residues: MENYEALVGFDLCNTPLSSVAQKIMSAMHSGDLVDSKTWGKSTETMEVINKSSVKYSVQLEDRKTQSPEKKDLKSLRSQTSRGSAKLSPQSFSVRLTDQLSADQKQKSISSLTLSSCLIPQYNQEASVLQKKGHKRKHFLMENINNENKGSINLKRKHITYNNLSEKTSKQMALEEDTDDAEGYLNSGNSGALKKHFCDIRHLDDWAKSQLIEMLKQAAALVITVMYTDGSTQLGADQTPVSSVRGIVVLVKRQAEGGHGCPDAPACGPVLEGFVSDDPCIYIQIEHSAIWDQEQEAHQQFARNVLFQTMKCKCPVICFNAKDFVRIVLQFFGNDGSWKHVADFIGLDPRIAAWLIDPSDATPSFEDLVEKYCEKSITVKVNSTYGNSSRNIVNQNVRENLKTLYRLTMDLCSKLKDYGLWQLFRTLELPLIPILAVMESHAIQVNKEEMEKTSALLGARLKELEQEAHFVAGERFLITSNNQLREILFGKLKLHLLSQRNSLPRTGLQKYPSTSEAVLNALRDLHPLPKIILEYRQVHKIKSTFVDGLLACMKKGSISSTWNQTGTVTGRLSAKHPNIQGISKHPIQITTPKNFKGKEDKILTISPRAMFVSSKGHTFLAADFSQIELRILTHLSGDPELLKLFQESERDDVFSTLTSQWKDVPVEQVTHADREQTKKVVYAVVYGAGKERLAACLGVPIQEAAQFLESFLQKYKKIKDFARAAIAQCHQTGCVVSIMGRRRPLPRIHAHDQQLRAQAERQAVNFVVQGSAADLCKLAMIHVFTAVAASHTLTARLVAQIHDELLFEVEDPQIPECAALVRRTMESLEQVQALELQLQVPLKVSLSAGRSWGHLVPLQEAWGPPPGPCRTESPSNSLAAPGSPASTQPPPLHFSPSFCL.

Basic and acidic residues predominate over residues Leu60–Ser75. Disordered stretches follow at residues Leu60–Gln90 and Gly863–Leu900. The segment covering Leu76–Gln90 has biased composition (polar residues).

Belongs to the DNA polymerase type-A family. As to quaternary structure, interacts with FANCD2, FANCI, PCNA, RAD51 and HELQ. As to expression, highly expressed in testis and heart. Weakly expressed in skeletal muscle.

The protein localises to the nucleus. The catalysed reaction is DNA(n) + a 2'-deoxyribonucleoside 5'-triphosphate = DNA(n+1) + diphosphate. Its activity is regulated as follows. Inhibited by ddTTP. DNA polymerase with very low fidelity that catalyzes considerable misincorporation by inserting dTTP opposite a G template, and dGTP opposite a T template. Is the least accurate of the DNA polymerase A family (i.e. POLG, POLN and POLQ). Can perform accurate translesion DNA synthesis (TLS) past a 5S-thymine glycol. Can perform efficient strand displacement past a nick or a gap and gives rise to an amount of product similar to that on non-damaged template. Has no exonuclease activity. Error-prone DNA polymerase that preferentially misincorporates dT regardless of template sequence. May play a role in TLS during interstrand cross-link (ICL) repair. May be involved in TLS when genomic replication is blocked by extremely large major groove DNA lesions. May function in the bypass of some DNA-protein and DNA-DNA cross-links. May have a role in cellular tolerance to DNA cross-linking agents. Involved in the repair of DNA cross-links and double-strand break (DSB) resistance. Participates in FANCD2-mediated repair. Forms a complex with HELQ helicase that participates in homologous recombination (HR) repair and is essential for cellular protection against DNA cross-links. This is DNA polymerase nu (POLN) from Homo sapiens (Human).